A 334-amino-acid polypeptide reads, in one-letter code: N-acetyl-S-alkylcysteine monooxygenase (334 aa).

To bacterial alkanal monooxygenase alpha and beta chains.

The enzyme catalyses N-acetyl-S-benzyl-L-cysteine + FMNH2 + O2 = (R)-N-acetyl-S-benzyl-L-cysteine sulfoxide + FMN + H2O + H(+). It carries out the reaction N-acetyl-S-methyl-L-cysteine + FMNH2 + O2 = (R)-N-acetyl-S-methyl-L-cysteine sulfoxide + FMN + H2O + H(+). It functions in the pathway amino-acid metabolism. Involved in a cysteine salvage pathway from S-alkylcysteine. Catalyzes the oxidation of N-acetyl-S-benzyl-L-cysteine and N-acetyl-S-methyl-L-cysteine to (R)-N-acetyl-S-benzyl-L-cysteine sulfoxide and (R)-N-acetyl-S-methyl-L-cysteine sulfoxide, respectively. This pathway is likely important in the catabolism of alkylated cysteine generated by proteolysis of alkylated glutathione formed in the detoxification of a wide range of electrophiles. The sequence is that of N-acetyl-S-alkylcysteine monooxygenase from Bacillus subtilis (strain 168).